Reading from the N-terminus, the 118-residue chain is Large ribosomal subunit protein bL19 (118 aa).

The protein belongs to the bacterial ribosomal protein bL19 family.

Its function is as follows. This protein is located at the 30S-50S ribosomal subunit interface and may play a role in the structure and function of the aminoacyl-tRNA binding site. This chain is Large ribosomal subunit protein bL19, found in Citrifermentans bemidjiense (strain ATCC BAA-1014 / DSM 16622 / JCM 12645 / Bem) (Geobacter bemidjiensis).